A 514-amino-acid chain; its full sequence is Histidine ammonia-lyase (514 aa).

The segment at residues 144–146 is a cross-link (5-imidazolinone (Ala-Gly)); that stretch reads ASG. Ser-145 is modified (2,3-didehydroalanine (Ser)).

This sequence belongs to the PAL/histidase family. Contains an active site 4-methylidene-imidazol-5-one (MIO), which is formed autocatalytically by cyclization and dehydration of residues Ala-Ser-Gly.

Its subcellular location is the cytoplasm. It carries out the reaction L-histidine = trans-urocanate + NH4(+). It functions in the pathway amino-acid degradation; L-histidine degradation into L-glutamate; N-formimidoyl-L-glutamate from L-histidine: step 1/3. This is Histidine ammonia-lyase from Rhodospirillum rubrum (strain ATCC 11170 / ATH 1.1.1 / DSM 467 / LMG 4362 / NCIMB 8255 / S1).